A 55-amino-acid chain; its full sequence is MAKKGARVQVTLEHKCEQGVYRYHTTKNRRNTTDRLELKKYSPVTKQHEIFKEIK.

Belongs to the bacterial ribosomal protein bL33 family.

Its subcellular location is the plastid. It localises to the chloroplast. The sequence is that of Large ribosomal subunit protein bL33c from Emiliania huxleyi (Coccolithophore).